A 353-amino-acid chain; its full sequence is Probable dual-specificity RNA methyltransferase RlmN (353 aa).

Glutamate 95 functions as the Proton acceptor in the catalytic mechanism. The Radical SAM core domain maps to 103 to 333 (DGGRKTICIS…PILNRRSPGR (231 aa)). A disulfide bridge links cysteine 110 with cysteine 339. 3 residues coordinate [4Fe-4S] cluster: cysteine 117, cysteine 121, and cysteine 124. Residues 164 to 165 (GE), serine 196, 219 to 221 (SLN), and asparagine 296 each bind S-adenosyl-L-methionine. The S-methylcysteine intermediate role is filled by cysteine 339.

This sequence belongs to the radical SAM superfamily. RlmN family. Requires [4Fe-4S] cluster as cofactor.

It is found in the cytoplasm. It catalyses the reaction adenosine(2503) in 23S rRNA + 2 reduced [2Fe-2S]-[ferredoxin] + 2 S-adenosyl-L-methionine = 2-methyladenosine(2503) in 23S rRNA + 5'-deoxyadenosine + L-methionine + 2 oxidized [2Fe-2S]-[ferredoxin] + S-adenosyl-L-homocysteine. The enzyme catalyses adenosine(37) in tRNA + 2 reduced [2Fe-2S]-[ferredoxin] + 2 S-adenosyl-L-methionine = 2-methyladenosine(37) in tRNA + 5'-deoxyadenosine + L-methionine + 2 oxidized [2Fe-2S]-[ferredoxin] + S-adenosyl-L-homocysteine. Specifically methylates position 2 of adenine 2503 in 23S rRNA and position 2 of adenine 37 in tRNAs. The protein is Probable dual-specificity RNA methyltransferase RlmN of Leptospira biflexa serovar Patoc (strain Patoc 1 / Ames).